A 316-amino-acid chain; its full sequence is uncharacterized protein (316 aa).

The protein belongs to the chlamydial CPn_0441/CT_007/TC_0275 family.

This is an uncharacterized protein from Chlamydia muridarum (strain MoPn / Nigg).